A 710-amino-acid polypeptide reads, in one-letter code: MQGKKPGGSSGGGRSGELQGDEAQRNKKKKKKVSCFSNIKIFLVSECALMLAQGTVGAYLVSVLTTLERRFNLQSADVGVIASSFEIGNLALILFVSYFGARGHRPRLIGCGGIVMALGALLSALPEFLTHQYKYEAGEIRWGAEGRDVCATNGSSSDEGPDPDLICRNRTATNMMYLLLIGAQVLLGIGATPVQPLGVSYIDDHVRRKDSSLYIGILFTMLVFGPACGFILGSFCTKIYVDAVFIDTSNLDITPDDPRWIGAWWGGFLLCGALLFFSSLLMFGFPQSLPPHSEPGMESEQAMLPEREYERPKPSNGVLRHPLEPDSSASCFQQLRVIPKVTKHLLSNPVFTCIVLAACMEIAVVAGFAAFLGKYLEQQFNLTTSSANQLLGMTAIPCACLGIFLGGLLVKKLSLSALGAIRMAMLVNLVSTACYVSFLFLGCDTVPVAGVTVRYGNNSARGSPLDPYSPCNNNCECQTDSFTPVCGADGITYLSACFAGCNSTNLTGCACLTTVPPENATVVPGKCPSPGCQEAFLTFLCVMCVCSLIGAMAQTPSVIILIRTVSPELKSYALGVLFLLLRLLGFIPPPLIFGAGIDSTCLFWSTFCGEQGACVLYDNVVYRYLYVSIAIALKSFAFILYTTTWQCLRKNYKRYIKNHEGGLSTSEFLASTLTLDNLGRDPVPAHQTHRTKFIYNLEDHEWCENMESVL.

N-acetylmethionine is present on Met1. Residues Met1–Ser15 show a composition bias toward gly residues. Positions Met1–Arg25 are disordered. The Cytoplasmic portion of the chain corresponds to Met1–Lys40. The helical transmembrane segment at Ile41–Leu60 threads the bilayer. Over Val61–Gly79 the chain is Extracellular. Residues Val80 to Gly100 form a helical membrane-spanning segment. Topologically, residues Ala101–Pro106 are cytoplasmic. A helical transmembrane segment spans residues Arg107–His131. Residues Gln132 to Asn174 are Extracellular-facing. N-linked (GlcNAc...) asparagine glycans are attached at residues Asn153 and Asn169. Residues Met175–Asp203 form a helical membrane-spanning segment. Residues Asp204–Leu222 lie on the Cytoplasmic side of the membrane. The chain crosses the membrane as a helical span at residues Val223–Ala243. Residues Val244–Ile261 lie on the Extracellular side of the membrane. The helical transmembrane segment at Gly262 to Pro286 threads the bilayer. At Gln287–His344 the chain is on the cytoplasmic side. The chain crosses the membrane as a helical span at residues Leu345–Ala366. Residues Gly367–Ser386 lie on the Extracellular side of the membrane. N-linked (GlcNAc...) asparagine glycosylation occurs at Asn381. Residues Ala387–Val410 form a helical membrane-spanning segment. Topologically, residues Lys411–Ser414 are cytoplasmic. Residues Leu415–Phe438 form a helical membrane-spanning segment. Topologically, residues Leu439–Phe539 are extracellular. The N-linked (GlcNAc...) asparagine glycan is linked to Asn457. In terms of domain architecture, Kazal-like spans Leu465–Thr513. 3 disulfide bridges follow: Cys471–Cys501, Cys477–Cys497, and Cys486–Cys511. Residues Asn502, Asn505, and Asn519 are each glycosylated (N-linked (GlcNAc...) asparagine). A helical membrane pass occupies residues Leu540–Ile562. Over Arg563–Ser571 the chain is Cytoplasmic. Residues Tyr572–Ile597 form a helical membrane-spanning segment. Over Asp598 to Ala630 the chain is Extracellular. The chain crosses the membrane as a helical span at residues Ile631–Leu648. Residues Arg649–Asn705 lie on the Cytoplasmic side of the membrane.

The protein belongs to the organo anion transporter (TC 2.A.60) family. As to expression, expressed in many brain regions, including frontal cortex, brain stem and cerebellum. Associated with neuronal bodies in a punctated matter. Detected at the arcuate nucleus and the choroid plexus (at protein level). Little expression, if any, in oligodendrocytes. In the cardiovascular system, detected in cardiac muscle cells and endothelial cells of aorta, coronary artery and left ventricular endocardium (at protein level). In the respiratory system, detected in alveolar epithelial cells and in mucosal epithelium of the trachea (at protein level). In the reproductive system, detected in spermatozoa, oocytes, smooth muscle cells of the ovary, epithelium of the glandula uterine, smooth muscle cells of the myometrium and epithelium of the endometrium (at protein level). In the kidney, detected in afferent and efferent arterioles, and the epithelium of distal tubules and collecting tubules (at protein level).

It localises to the basolateral cell membrane. Its subcellular location is the apical cell membrane. The protein resides in the basal cell membrane. The catalysed reaction is L-thyroxine(out) = L-thyroxine(in). The enzyme catalyses prostaglandin E1(out) = prostaglandin E1(in). It carries out the reaction prostaglandin E2(out) = prostaglandin E2(in). It catalyses the reaction prostaglandin F2alpha(out) = prostaglandin F2alpha(in). The catalysed reaction is (5Z,8Z,11Z,14Z)-eicosatetraenoate(out) = (5Z,8Z,11Z,14Z)-eicosatetraenoate(in). The enzyme catalyses taurocholate(out) = taurocholate(in). It carries out the reaction glycocholate(out) = glycocholate(in). It catalyses the reaction estrone 3-sulfate(out) = estrone 3-sulfate(in). The catalysed reaction is argipressin(out) = argipressin(in). Its function is as follows. Putative organic anion antiporter with apparent broad substrate specificity. Recognizes various substrates including thyroid hormone L-thyroxine, prostanoids such as prostaglandin E1 and E2, bile acids such as taurocholate, glycolate and glycochenodeoxycholate and peptide hormones such as L-arginine vasopressin, likely operating in a tissue-specific manner. The transport mechanism, its electrogenicity and potential tissue-specific counterions remain to be elucidated. The sequence is that of Solute carrier organic anion transporter family member 3A1 (Slco3a1) from Rattus norvegicus (Rat).